We begin with the raw amino-acid sequence, 205 residues long: Urease accessory protein UreG (205 aa).

14 to 21 (GPVGSGKT) is a GTP binding site.

This sequence belongs to the SIMIBI class G3E GTPase family. UreG subfamily. Homodimer. UreD, UreF and UreG form a complex that acts as a GTP-hydrolysis-dependent molecular chaperone, activating the urease apoprotein by helping to assemble the nickel containing metallocenter of UreC. The UreE protein probably delivers the nickel.

It localises to the cytoplasm. In terms of biological role, facilitates the functional incorporation of the urease nickel metallocenter. This process requires GTP hydrolysis, probably effectuated by UreG. In Citrobacter koseri (strain ATCC BAA-895 / CDC 4225-83 / SGSC4696), this protein is Urease accessory protein UreG.